The primary structure comprises 217 residues: Homeobox protein Hox-B7 (217 aa).

The Antp-type hexapeptide motif lies at isoleucine 126 to arginine 131. Positions arginine 137–asparagine 196 form a DNA-binding region, homeobox. The segment at lysine 194–glutamate 217 is disordered.

It belongs to the Antp homeobox family. In terms of assembly, forms a DNA-binding heterodimer with transcription factor PBX1.

Its subcellular location is the nucleus. Its function is as follows. Sequence-specific transcription factor which is part of a developmental regulatory system that provides cells with specific positional identities on the anterior-posterior axis. The sequence is that of Homeobox protein Hox-B7 (HOXB7) from Homo sapiens (Human).